Consider the following 261-residue polypeptide: Guanine nucleotide exchange factor BopE (261 aa).

It belongs to the GEF (guanine exchange factor) SopE family. As to quaternary structure, monomer. Interacts with human CDC42.

Its subcellular location is the secreted. In terms of biological role, activator for both CDC42 and RAC1 by directly interacting with these Rho GTPases and acting as a guanine nucleotide exchange factor (GEF). This activation results in actin cytoskeleton rearrangements and stimulates membrane ruffling, thus promoting bacterial entry into non-phagocytic cells. The polypeptide is Guanine nucleotide exchange factor BopE (bopE) (Burkholderia pseudomallei (strain 1710b)).